Reading from the N-terminus, the 186-residue chain is Protein GrpE (186 aa).

2 stretches are compositionally biased toward basic and acidic residues: residues Met1–His13 and Glu23–His34. Residues Met1–His34 are disordered.

The protein belongs to the GrpE family. As to quaternary structure, homodimer.

It localises to the cytoplasm. Participates actively in the response to hyperosmotic and heat shock by preventing the aggregation of stress-denatured proteins, in association with DnaK and GrpE. It is the nucleotide exchange factor for DnaK and may function as a thermosensor. Unfolded proteins bind initially to DnaJ; upon interaction with the DnaJ-bound protein, DnaK hydrolyzes its bound ATP, resulting in the formation of a stable complex. GrpE releases ADP from DnaK; ATP binding to DnaK triggers the release of the substrate protein, thus completing the reaction cycle. Several rounds of ATP-dependent interactions between DnaJ, DnaK and GrpE are required for fully efficient folding. This chain is Protein GrpE, found in Hydrogenovibrio crunogenus (strain DSM 25203 / XCL-2) (Thiomicrospira crunogena).